The sequence spans 563 residues: Efflux pump notK (563 aa).

A disordered region spans residues 1 to 32 (MTKDEDSGTTDGGYSTPDIAVQEKQDQPPAPE). Helical transmembrane passes span 48-68 (IFLS…AIPG), 78-98 (DVGW…PMWG), 108-128 (LVYL…AAAP), 138-158 (ALQG…ISYV), 165-185 (AMLI…GPLL), 197-217 (WCFW…VLFF), 239-259 (LPGF…LQWG), 270-290 (VIAT…VEWI), 312-332 (LYGW…PIYF), 345-365 (VNSL…GFLI), 374-394 (YEFA…TLDI), 406-426 (VIFG…LESF), 438-458 (VMLM…QSIF), and 509-529 (VFAF…AIPF). Positions 538–563 (GPSNGQEEEEGKKDGPAEKKEDEVAV) are disordered. Residues 547-563 (EGKKDGPAEKKEDEVAV) show a composition bias toward basic and acidic residues.

This sequence belongs to the major facilitator superfamily. TCR/Tet family.

Its subcellular location is the cell membrane. Its function is as follows. Efflux pump; part of the gene cluster that mediates the biosynthesis of notoamide, a fungal indole alkaloid that belongs to a family of natural products containing a characteristic bicyclo[2.2.2]diazaoctane core. This Aspergillus sp. (strain MF297-2) protein is Efflux pump notK.